The chain runs to 265 residues: uncharacterized protein (265 aa).

A divalent metal cation contacts are provided by His-7, His-9, Glu-94, His-130, His-155, and Asp-205.

It belongs to the metallo-dependent hydrolases superfamily. TatD-type hydrolase family. A divalent metal cation is required as a cofactor.

This is an uncharacterized protein from Escherichia coli O157:H7.